A 132-amino-acid chain; its full sequence is MKGLTSKIPRALQTGSKMVCADNTGARVVQIVSVFGYHGVKNRQPKMGLGDLATVTVKKGTPDMKRKLVRAVVVRQKKEFRRPNGLRVSFEENAMILLNENGDPRGTDIKGPVAREVAERFPKVGSMATIII.

This sequence belongs to the universal ribosomal protein uL14 family. Part of the 50S ribosomal subunit. Forms a cluster with proteins L3 and L24e, part of which may contact the 16S rRNA in 2 intersubunit bridges.

Functionally, binds to 23S rRNA. Forms part of two intersubunit bridges in the 70S ribosome. This Methanocorpusculum labreanum (strain ATCC 43576 / DSM 4855 / Z) protein is Large ribosomal subunit protein uL14.